Here is a 269-residue protein sequence, read N- to C-terminus: UPF0328 protein ECU03_0020 (269 aa).

It belongs to the UPF0328 family.

The sequence is that of UPF0328 protein ECU03_0020 from Encephalitozoon cuniculi (strain GB-M1) (Microsporidian parasite).